We begin with the raw amino-acid sequence, 634 residues long: Threonine--tRNA ligase (634 aa).

The region spanning 1–61 is the TGS domain; that stretch reads MINITLPDGS…DHDASLRIIT (61 aa). A catalytic region spans residues 243–534; it reads DHRRIGKAQD…LIEHHAGAFP (292 aa). Zn(2+) is bound by residues Cys-334, His-385, and His-511.

Belongs to the class-II aminoacyl-tRNA synthetase family. Homodimer. The cofactor is Zn(2+).

It is found in the cytoplasm. It catalyses the reaction tRNA(Thr) + L-threonine + ATP = L-threonyl-tRNA(Thr) + AMP + diphosphate + H(+). Catalyzes the attachment of threonine to tRNA(Thr) in a two-step reaction: L-threonine is first activated by ATP to form Thr-AMP and then transferred to the acceptor end of tRNA(Thr). Also edits incorrectly charged L-seryl-tRNA(Thr). In Xanthomonas euvesicatoria pv. vesicatoria (strain 85-10) (Xanthomonas campestris pv. vesicatoria), this protein is Threonine--tRNA ligase.